The primary structure comprises 106 residues: BLOC-1-related complex subunit 7 (106 aa).

This sequence belongs to the BORCS7 family. As to quaternary structure, component of the BLOC-one-related complex (BORC) which is composed of BLOC1S1, BLOC1S2, BORCS5, BORCS6, BORCS7, BORCS8, KXD1 and SNAPIN.

The protein resides in the lysosome membrane. Its function is as follows. As part of the BORC complex may play a role in lysosomes movement and localization at the cell periphery. Associated with the cytosolic face of lysosomes, the BORC complex may recruit ARL8B and couple lysosomes to microtubule plus-end-directed kinesin motor. The chain is BLOC-1-related complex subunit 7 from Homo sapiens (Human).